The chain runs to 160 residues: 2-C-methyl-D-erythritol 2,4-cyclodiphosphate synthase (160 aa).

2 residues coordinate a divalent metal cation: D11 and H13. Residues 11–13 and 37–38 contribute to the 4-CDP-2-C-methyl-D-erythritol 2-phosphate site; these read DVH and HS. H45 provides a ligand contact to a divalent metal cation. 4-CDP-2-C-methyl-D-erythritol 2-phosphate-binding positions include 59-61 and R145; that span reads DIG.

It belongs to the IspF family. As to quaternary structure, homotrimer. A divalent metal cation serves as cofactor.

The enzyme catalyses 4-CDP-2-C-methyl-D-erythritol 2-phosphate = 2-C-methyl-D-erythritol 2,4-cyclic diphosphate + CMP. The protein operates within isoprenoid biosynthesis; isopentenyl diphosphate biosynthesis via DXP pathway; isopentenyl diphosphate from 1-deoxy-D-xylulose 5-phosphate: step 4/6. Involved in the biosynthesis of isopentenyl diphosphate (IPP) and dimethylallyl diphosphate (DMAPP), two major building blocks of isoprenoid compounds. Catalyzes the conversion of 4-diphosphocytidyl-2-C-methyl-D-erythritol 2-phosphate (CDP-ME2P) to 2-C-methyl-D-erythritol 2,4-cyclodiphosphate (ME-CPP) with a corresponding release of cytidine 5-monophosphate (CMP). The sequence is that of 2-C-methyl-D-erythritol 2,4-cyclodiphosphate synthase from Neisseria meningitidis serogroup B (strain ATCC BAA-335 / MC58).